The chain runs to 95 residues: Small ribosomal subunit protein bS6 (95 aa).

Belongs to the bacterial ribosomal protein bS6 family.

Binds together with bS18 to 16S ribosomal RNA. The polypeptide is Small ribosomal subunit protein bS6 (Bacillus velezensis (strain DSM 23117 / BGSC 10A6 / LMG 26770 / FZB42) (Bacillus amyloliquefaciens subsp. plantarum)).